The sequence spans 562 residues: NAD-dependent malic enzyme (562 aa).

Tyr101 acts as the Proton donor in catalysis. Arg154 is an NAD(+) binding site. Residue Lys172 is the Proton acceptor of the active site. A divalent metal cation is bound by residues Glu243, Asp244, and Asp267. Asp267 and Asn415 together coordinate NAD(+).

It belongs to the malic enzymes family. Homotetramer. Mg(2+) is required as a cofactor. It depends on Mn(2+) as a cofactor.

It catalyses the reaction (S)-malate + NAD(+) = pyruvate + CO2 + NADH. The enzyme catalyses oxaloacetate + H(+) = pyruvate + CO2. This is NAD-dependent malic enzyme from Shewanella baltica (strain OS155 / ATCC BAA-1091).